A 365-amino-acid chain; its full sequence is MAAAAAGTATSQRFFQSFSDALIDEDPQAALEELTKALEQKPDDAQYYCQRAYCHILLGNYCVAVADAKKSLELNPNNSTAMLRKGICEYHEKNYAAALETFTEGQKLDIETGFHRVGQAGLQLLTSSDPPALDSQSAGITGADANFSVWIKRCQEAQNGSESEVWTHQSKIKYDWYQTESQVVITLMIKNVQKNDVNVEFSEKELSALVKLPSGEDYNLKLELLHPIIPEQSTFKVLSTKIEIKLKKPEAVRWEKLEGQGDVPTPKQFVADVKNLYPSSSPYTRNWDKLVGEIKEEEKNEKLEGDAALNRLFQQIYSDGSDEVKRAMNKSFMESGGTVLSTNWSDVGKRKVEINPPDDMEWKKY.

Residue A2 is modified to N-acetylalanine. TPR repeat units lie at residues 11-44, 45-78, and 79-112; these read SQRF…KPDD, AQYY…NPNN, and STAM…DIET. The CS domain occupies 169-258; that stretch reads QSKIKYDWYQ…PEAVRWEKLE (90 aa). A Phosphothreonine modification is found at T265. An SGS domain is found at 276-365; the sequence is LYPSSSPYTR…PPDDMEWKKY (90 aa). S281 carries the post-translational modification Phosphoserine. At T284 the chain carries Phosphothreonine. Residue K295 forms a Glycyl lysine isopeptide (Lys-Gly) (interchain with G-Cter in SUMO1); alternate linkage. K295 participates in a covalent cross-link: Glycyl lysine isopeptide (Lys-Gly) (interchain with G-Cter in SUMO2); alternate. S331 bears the Phosphoserine mark.

This sequence belongs to the SGT1 family. Probably associates with SCF (SKP1-CUL1-F-box protein) complex through interaction with SKP1. Interacts with S100A6. Interacts with HSP90. Post-translationally, phosphorylated at Ser-281 and Ser-331, dephosphorylation promotes nuclear translocation, most likely due to disruption of the SUGT1-HSP90 complex.

The protein resides in the cytoplasm. It is found in the nucleus. May play a role in ubiquitination and subsequent proteasomal degradation of target proteins. The sequence is that of Protein SGT1 homolog from Homo sapiens (Human).